Consider the following 400-residue polypeptide: Transcription initiation factor IIF subunit beta (400 aa).

Positions 1–19 (MSSGSAGAPALSNNSTNSV) are enriched in polar residues. A disordered region spans residues 1-47 (MSSGSAGAPALSNNSTNSVAKEKSGNISGDEYLSQEEEVFDGNDIEN). 3 positions are modified to phosphoserine: serine 28, serine 34, and serine 56. The segment covering 33-47 (LSQEEEVFDGNDIEN) has biased composition (acidic residues). Disordered regions lie at residues 165 to 194 (QEREEELKKKQQQQKRRNNRKKFNHRVMTD) and 366 to 400 (TLGELADEQTGSAGDNAQGDAEADLEDEIEMEDVV). The span at 174-189 (KQQQQKRRNNRKKFNH) shows a compositional bias: basic residues. Residues 386–400 (AEADLEDEIEMEDVV) are compositionally biased toward acidic residues.

This sequence belongs to the TFIIF beta subunit family. TFIIF is composed of three different subunits: TFG1/RAP74, TFG2/RAP30 and TAF14.

It is found in the nucleus. TFIIF is a general transcription initiation factor that binds to RNA polymerase II. Its functions include the recruitment of RNA polymerase II to the promoter bound DNA-TBP-TFIIB complex, decreasing the affinity of RNA polymerase II for non-specific DNA, allowing for the subsequent recruitment of TFIIE and TFIIH, and facilitating RNA polymerase II elongation. This is Transcription initiation factor IIF subunit beta (TFG2) from Saccharomyces cerevisiae (strain ATCC 204508 / S288c) (Baker's yeast).